Consider the following 246-residue polypeptide: Pyridoxine 5'-phosphate synthase (246 aa).

N12 provides a ligand contact to 3-amino-2-oxopropyl phosphate. D14–H15 is a binding site for 1-deoxy-D-xylulose 5-phosphate. R23 is a binding site for 3-amino-2-oxopropyl phosphate. The active-site Proton acceptor is the H48. 1-deoxy-D-xylulose 5-phosphate-binding residues include R50 and H55. E75 acts as the Proton acceptor in catalysis. T105 contacts 1-deoxy-D-xylulose 5-phosphate. The active-site Proton donor is the H196. Residues G197 and G218–H219 contribute to the 3-amino-2-oxopropyl phosphate site.

Belongs to the PNP synthase family. Homooctamer; tetramer of dimers.

It localises to the cytoplasm. It carries out the reaction 3-amino-2-oxopropyl phosphate + 1-deoxy-D-xylulose 5-phosphate = pyridoxine 5'-phosphate + phosphate + 2 H2O + H(+). Its pathway is cofactor biosynthesis; pyridoxine 5'-phosphate biosynthesis; pyridoxine 5'-phosphate from D-erythrose 4-phosphate: step 5/5. Its function is as follows. Catalyzes the complicated ring closure reaction between the two acyclic compounds 1-deoxy-D-xylulose-5-phosphate (DXP) and 3-amino-2-oxopropyl phosphate (1-amino-acetone-3-phosphate or AAP) to form pyridoxine 5'-phosphate (PNP) and inorganic phosphate. The chain is Pyridoxine 5'-phosphate synthase from Pseudomonas putida (strain W619).